A 471-amino-acid chain; its full sequence is Probable anion transporter 5, chloroplastic (471 aa).

A chloroplast-targeting transit peptide spans 1–59; that stretch reads MAASASASALQAERCLLVGVGAGPRRHRLPLRMPPPLHAPPALLLLPHRRRRRWPPAVR. The disordered stretch occupies residues 56–76; the sequence is PAVRASPGEGGGGGGGGGGGG. 4 helical membrane passes run 62-82, 103-123, 162-182, and 185-205; these read PGEG…AGAL, IGVV…GFMP, VVFG…PPII, and LGWE…CLGF. Residues 63–76 show a composition bias toward gly residues; the sequence is GEGGGGGGGGGGGG. Positions 226–247 are disordered; that stretch reads GQSPSGSSDLISSSVSPKSSES. Over residues 228 to 247 the composition is skewed to low complexity; that stretch reads SPSGSSDLISSSVSPKSSES. Transmembrane regions (helical) follow at residues 270–290, 307–327, 348–368, 371–391, 403–423, and 435–455; these read VWAM…CLSW, AWVS…AAPF, IAFL…GVPP, IVAF…GLYC, ILLG…VALT, and ISLF…WLAF.

Belongs to the major facilitator superfamily. Sodium/anion cotransporter (TC 2.A.1.14) family.

The protein resides in the plastid. The protein localises to the chloroplast membrane. Probable anion transporter. The chain is Probable anion transporter 5, chloroplastic (PHT4;5) from Oryza sativa subsp. japonica (Rice).